Reading from the N-terminus, the 91-residue chain is Small ribosomal subunit protein bS18 (91 aa).

The protein belongs to the bacterial ribosomal protein bS18 family. Part of the 30S ribosomal subunit. Forms a tight heterodimer with protein bS6.

Functionally, binds as a heterodimer with protein bS6 to the central domain of the 16S rRNA, where it helps stabilize the platform of the 30S subunit. This Paraburkholderia xenovorans (strain LB400) protein is Small ribosomal subunit protein bS18.